Here is a 653-residue protein sequence, read N- to C-terminus: MGKKRGTGLGRSLQRQRGSERRGASSWLHASEVVGESGPERRSAVEQSPLEEFLATAELAGTRFVAERLNIQFVSAQSRTGLLTAQEAQHVRQLHEENRQFLRIPRRPYWDRTTSSEDLKQAERESFLEWRRQLAHLEEEKKLILTPFERNLEFWRQLWRVIERSDIVVQIVDARNPLLFRCQDLESYVKEVSNDKENMILINKADLLSEEQRAAWAQFFEKEGVKVVFWSALAECRRLSGEVKELDADSVADDLSDSEEESSSQEEDVTAEDSAESTSTGSALQTENQCLLSDDDSSDEYEDCEDEEEDDWQTCSEDEGGDKVNAIAPKSMENRTDIVSMHHVVQEQNRNVKNFSHLVQRNELLEIFKTLHSGPRVKDGEVNVGLVGYPNVGKSSTINTILGDKKVSVSATPGRTKHFQTLYVEPGLCLCDCPGLVMPSFVSTKAEMICSGILPIDQMRDHVPPISLVCQHIPRNILEATYGINIIRPREDEDPDRKPTAEELLTAYGYMRGFMTAHGQPDQPRSARYVLKDYVSGKLLYCHPPPGIDPDGFQHQHERCPESRTVQASGPVKPKKNTKAKQIENVVDKSFFHQENVRALMKGVRATMGYRPGSGLVSVPAPSAGSVVGKPWKKHGNRNKKEKVRRITKHLEN.

The segment at 1 to 47 is disordered; that stretch reads MGKKRGTGLGRSLQRQRGSERRGASSWLHASEVVGESGPERRSAVEQ. A CP-type G domain is found at 155 to 439; that stretch reads WRQLWRVIER…LCDCPGLVMP (285 aa). 203-206 lines the GTP pocket; the sequence is NKAD. Positions 248-275 are enriched in acidic residues; the sequence is ADSVADDLSDSEEESSSQEEDVTAEDSA. The interval 248-323 is disordered; it reads ADSVADDLSD…TCSEDEGGDK (76 aa). Over residues 276–291 the composition is skewed to polar residues; that stretch reads ESTSTGSALQTENQCL. Positions 293–320 are enriched in acidic residues; the sequence is SDDDSSDEYEDCEDEEEDDWQTCSEDEG. Residues 388–395 and 432–435 contribute to the GTP site; these read GYPNVGKS and DCPG. Positions 621-653 are disordered; sequence APSAGSVVGKPWKKHGNRNKKEKVRRITKHLEN. Over residues 631–653 the composition is skewed to basic residues; the sequence is PWKKHGNRNKKEKVRRITKHLEN.

This sequence belongs to the TRAFAC class YlqF/YawG GTPase family. LSG1 subfamily.

The protein resides in the cytoplasm. It localises to the endoplasmic reticulum. Its subcellular location is the nucleus. It is found in the cajal body. The catalysed reaction is GTP + H2O = GDP + phosphate + H(+). In terms of biological role, GTPase required for the XPO1/CRM1-mediated nuclear export of the 60S ribosomal subunit. Probably acts by mediating the release of NMD3 from the 60S ribosomal subunit after export into the cytoplasm. Its function is as follows. Functions as a GTPase. May act by mediating the release of NMD3 from the 60S ribosomal subunit after export into the cytoplasm during the 60S ribosomal subunit maturation. This chain is Large subunit GTPase 1 homolog, found in Gallus gallus (Chicken).